The chain runs to 301 residues: Putative S-adenosyl-L-methionine-dependent methyltransferase MT0851 (301 aa).

S-adenosyl-L-methionine is bound by residues Asp-127 and 156-157; that span reads DL.

The protein belongs to the UPF0677 family.

Exhibits S-adenosyl-L-methionine-dependent methyltransferase activity. The polypeptide is Putative S-adenosyl-L-methionine-dependent methyltransferase MT0851 (Mycobacterium tuberculosis (strain CDC 1551 / Oshkosh)).